The sequence spans 461 residues: Asparagine--tRNA ligase (461 aa).

It belongs to the class-II aminoacyl-tRNA synthetase family. As to quaternary structure, homodimer.

It localises to the cytoplasm. It catalyses the reaction tRNA(Asn) + L-asparagine + ATP = L-asparaginyl-tRNA(Asn) + AMP + diphosphate + H(+). In Oleidesulfovibrio alaskensis (strain ATCC BAA-1058 / DSM 17464 / G20) (Desulfovibrio alaskensis), this protein is Asparagine--tRNA ligase.